A 356-amino-acid chain; its full sequence is DNA polymerase IV (356 aa).

Positions 6-187 (IIHIDMDYFF…LDIGDFPGVG (182 aa)) constitute a UmuC domain. Positions 10 and 105 each coordinate Mg(2+). Glu-106 is a catalytic residue.

It belongs to the DNA polymerase type-Y family. Monomer. Mg(2+) serves as cofactor.

It is found in the cytoplasm. It catalyses the reaction DNA(n) + a 2'-deoxyribonucleoside 5'-triphosphate = DNA(n+1) + diphosphate. Functionally, poorly processive, error-prone DNA polymerase involved in untargeted mutagenesis. Copies undamaged DNA at stalled replication forks, which arise in vivo from mismatched or misaligned primer ends. These misaligned primers can be extended by PolIV. Exhibits no 3'-5' exonuclease (proofreading) activity. May be involved in translesional synthesis, in conjunction with the beta clamp from PolIII. The chain is DNA polymerase IV from Staphylococcus epidermidis (strain ATCC 35984 / DSM 28319 / BCRC 17069 / CCUG 31568 / BM 3577 / RP62A).